Consider the following 452-residue polypeptide: Probable phosphoglucosamine mutase (452 aa).

S101 serves as the catalytic Phosphoserine intermediate. Residues S101, D242, D244, and D246 each contribute to the Mg(2+) site. S101 bears the Phosphoserine mark.

It belongs to the phosphohexose mutase family. Mg(2+) is required as a cofactor. In terms of processing, activated by phosphorylation.

It carries out the reaction alpha-D-glucosamine 1-phosphate = D-glucosamine 6-phosphate. Its function is as follows. Catalyzes the conversion of glucosamine-6-phosphate to glucosamine-1-phosphate. The polypeptide is Probable phosphoglucosamine mutase (Methanosphaera stadtmanae (strain ATCC 43021 / DSM 3091 / JCM 11832 / MCB-3)).